The primary structure comprises 365 residues: S-adenosylmethionine:tRNA ribosyltransferase-isomerase (365 aa).

Belongs to the QueA family. Monomer.

It is found in the cytoplasm. The enzyme catalyses 7-aminomethyl-7-carbaguanosine(34) in tRNA + S-adenosyl-L-methionine = epoxyqueuosine(34) in tRNA + adenine + L-methionine + 2 H(+). Its pathway is tRNA modification; tRNA-queuosine biosynthesis. Transfers and isomerizes the ribose moiety from AdoMet to the 7-aminomethyl group of 7-deazaguanine (preQ1-tRNA) to give epoxyqueuosine (oQ-tRNA). The sequence is that of S-adenosylmethionine:tRNA ribosyltransferase-isomerase from Rickettsia conorii (strain ATCC VR-613 / Malish 7).